Here is a 202-residue protein sequence, read N- to C-terminus: Lipoprotein signal peptidase (202 aa).

A disordered region spans residues 1–29 (MPDEPTGSADPLTSTEEAGGAGEPNAPAP). Transmembrane regions (helical) follow at residues 35–55 (MLLS…VVAV), 88–108 (GYTW…FWMG), and 112–132 (VSPW…GNLV). Active-site residues include D148 and D162. A helical membrane pass occupies residues 160–180 (VADPSVVGGAILLVILSIFGF).

This sequence belongs to the peptidase A8 family.

The protein resides in the cell membrane. It catalyses the reaction Release of signal peptides from bacterial membrane prolipoproteins. Hydrolyzes -Xaa-Yaa-Zaa-|-(S,diacylglyceryl)Cys-, in which Xaa is hydrophobic (preferably Leu), and Yaa (Ala or Ser) and Zaa (Gly or Ala) have small, neutral side chains.. The protein operates within protein modification; lipoprotein biosynthesis (signal peptide cleavage). In terms of biological role, this protein specifically catalyzes the removal of signal peptides from prolipoproteins. In Mycobacterium bovis (strain ATCC BAA-935 / AF2122/97), this protein is Lipoprotein signal peptidase.